The primary structure comprises 191 residues: Peptidyl-tRNA hydrolase (191 aa).

Tyr-14 provides a ligand contact to tRNA. Catalysis depends on His-19, which acts as the Proton acceptor. The tRNA site is built by Tyr-65, Asn-67, and Asn-113.

The protein belongs to the PTH family. As to quaternary structure, monomer.

The protein resides in the cytoplasm. The enzyme catalyses an N-acyl-L-alpha-aminoacyl-tRNA + H2O = an N-acyl-L-amino acid + a tRNA + H(+). Its function is as follows. Hydrolyzes ribosome-free peptidyl-tRNAs (with 1 or more amino acids incorporated), which drop off the ribosome during protein synthesis, or as a result of ribosome stalling. In terms of biological role, catalyzes the release of premature peptidyl moieties from peptidyl-tRNA molecules trapped in stalled 50S ribosomal subunits, and thus maintains levels of free tRNAs and 50S ribosomes. In Nitrosospira multiformis (strain ATCC 25196 / NCIMB 11849 / C 71), this protein is Peptidyl-tRNA hydrolase.